The following is a 281-amino-acid chain: Pantothenate synthetase (281 aa).

30–37 (MGYLHEGH) contacts ATP. H37 serves as the catalytic Proton donor. Position 61 (Q61) interacts with (R)-pantoate. Q61 contributes to the beta-alanine binding site. 147-150 (GEKD) provides a ligand contact to ATP. Q153 provides a ligand contact to (R)-pantoate. ATP contacts are provided by residues I176 and 184–187 (KSSR).

This sequence belongs to the pantothenate synthetase family. As to quaternary structure, homodimer.

It is found in the cytoplasm. The catalysed reaction is (R)-pantoate + beta-alanine + ATP = (R)-pantothenate + AMP + diphosphate + H(+). It participates in cofactor biosynthesis; (R)-pantothenate biosynthesis; (R)-pantothenate from (R)-pantoate and beta-alanine: step 1/1. In terms of biological role, catalyzes the condensation of pantoate with beta-alanine in an ATP-dependent reaction via a pantoyl-adenylate intermediate. The sequence is that of Pantothenate synthetase from Clostridium botulinum (strain Okra / Type B1).